The following is a 673-amino-acid chain: UvrABC system protein B (673 aa).

The Helicase ATP-binding domain occupies Glu26–Arg183. An ATP-binding site is contributed by Gly39–Thr46. The Beta-hairpin motif lies at Tyr92 to Val115. Residues Gln431 to Leu597 form the Helicase C-terminal domain. Residues Ala608–Met627 are disordered. A UVR domain is found at Gln633–Leu668.

Belongs to the UvrB family. Forms a heterotetramer with UvrA during the search for lesions. Interacts with UvrC in an incision complex.

Its subcellular location is the cytoplasm. In terms of biological role, the UvrABC repair system catalyzes the recognition and processing of DNA lesions. A damage recognition complex composed of 2 UvrA and 2 UvrB subunits scans DNA for abnormalities. Upon binding of the UvrA(2)B(2) complex to a putative damaged site, the DNA wraps around one UvrB monomer. DNA wrap is dependent on ATP binding by UvrB and probably causes local melting of the DNA helix, facilitating insertion of UvrB beta-hairpin between the DNA strands. Then UvrB probes one DNA strand for the presence of a lesion. If a lesion is found the UvrA subunits dissociate and the UvrB-DNA preincision complex is formed. This complex is subsequently bound by UvrC and the second UvrB is released. If no lesion is found, the DNA wraps around the other UvrB subunit that will check the other stand for damage. In Escherichia coli O81 (strain ED1a), this protein is UvrABC system protein B.